The sequence spans 157 residues: Selenoprotein F (157 aa).

Residues 1–19 (MSGEVYILWLLSLIQTLSA) form the signal peptide. U84 is a non-standard amino acid (selenocysteine).

It belongs to the selenoprotein M/F family. As to expression, expressed in the brain, liver and retina. Localized to the retinal ganglion cell layer, the inner nuclear layer and the outer nuclear layer at both parr and smolt stages.

It localises to the endoplasmic reticulum lumen. Functionally, may be involved in redox reactions associated with the formation of disulfide bonds. May contribute to the quality control of protein folding in the endoplasmic reticulum. May be involved in retinal development. The polypeptide is Selenoprotein F (Oncorhynchus mykiss (Rainbow trout)).